The following is a 208-amino-acid chain: FMN-dependent NADH:quinone oxidoreductase (208 aa).

Residues 17-19, 99-102, and 143-146 contribute to the FMN site; these read SNS, MWNL, and SRGG.

It belongs to the azoreductase type 1 family. As to quaternary structure, homodimer. It depends on FMN as a cofactor.

The catalysed reaction is 2 a quinone + NADH + H(+) = 2 a 1,4-benzosemiquinone + NAD(+). It catalyses the reaction N,N-dimethyl-1,4-phenylenediamine + anthranilate + 2 NAD(+) = 2-(4-dimethylaminophenyl)diazenylbenzoate + 2 NADH + 2 H(+). Quinone reductase that provides resistance to thiol-specific stress caused by electrophilic quinones. In terms of biological role, also exhibits azoreductase activity. Catalyzes the reductive cleavage of the azo bond in aromatic azo compounds to the corresponding amines. The chain is FMN-dependent NADH:quinone oxidoreductase from Staphylococcus aureus (strain MRSA252).